The chain runs to 132 residues: Large-conductance mechanosensitive channel (132 aa).

The next 2 membrane-spanning stretches (helical) occupy residues 10-30 (FAVK…SAFG) and 76-96 (GNFI…FLAI).

Belongs to the MscL family. In terms of assembly, homopentamer.

It is found in the cell inner membrane. Functionally, channel that opens in response to stretch forces in the membrane lipid bilayer. May participate in the regulation of osmotic pressure changes within the cell. This is Large-conductance mechanosensitive channel from Campylobacter hominis (strain ATCC BAA-381 / DSM 21671 / CCUG 45161 / LMG 19568 / NCTC 13146 / CH001A).